Reading from the N-terminus, the 276-residue chain is Large ribosomal subunit protein uL2 (276 aa).

A disordered region spans residues 223–276 (VVMNPVDHPHGGGEGKSSGGRHPVSPWGKKTRGPKTRNNKVTDRLIIRRRNAKR). The segment covering 251-260 (KKTRGPKTRN) has biased composition (basic residues).

The protein belongs to the universal ribosomal protein uL2 family. In terms of assembly, part of the 50S ribosomal subunit. Forms a bridge to the 30S subunit in the 70S ribosome.

Functionally, one of the primary rRNA binding proteins. Required for association of the 30S and 50S subunits to form the 70S ribosome, for tRNA binding and peptide bond formation. It has been suggested to have peptidyltransferase activity; this is somewhat controversial. Makes several contacts with the 16S rRNA in the 70S ribosome. This chain is Large ribosomal subunit protein uL2, found in Hyphomonas neptunium (strain ATCC 15444).